The sequence spans 302 residues: RNA polymerase II holoenzyme cyclin-like subunit (302 aa).

In terms of domain architecture, Cyclin N-terminal spans 53–142 (QQLIKLGKRM…VGECEFSLIS (90 aa)).

Belongs to the cyclin family. Cyclin C subfamily. As to quaternary structure, component of the srb8-11 complex, a regulatory module of the Mediator complex.

It localises to the nucleus. Its function is as follows. Component of the srb8-11 complex. The srb8-11 complex is a regulatory module of the Mediator complex which is itself involved in regulation of basal and activated RNA polymerase II-dependent transcription. The srb8-11 complex may be involved in the transcriptional repression of a subset of genes regulated by Mediator. It may inhibit the association of the Mediator complex with RNA polymerase II to form the holoenzyme complex. The srb8-11 complex phosphorylates the C-terminal domain (CTD) of the largest subunit of RNA polymerase II. This is RNA polymerase II holoenzyme cyclin-like subunit (ssn8) from Emericella nidulans (strain FGSC A4 / ATCC 38163 / CBS 112.46 / NRRL 194 / M139) (Aspergillus nidulans).